Reading from the N-terminus, the 529-residue chain is MLLAVLYCLLWSFQTSAGHFPRACVSSKNLMEKECCPPWSGDRSPCGQLSGRGSCQNILLSNAPLGPQFPFTGVDDRESWPSVFYNRTCQCSGNFMGFNCGNCKFGFWGPNCTERRLLVRRNIFDLSAPEKDKFFAYLTLAKHTISSDYVIPIGTYGQMKNGSTPMFNDINIYDLFVWMHYYVSMDALLGGSEIWRDIDFAHEAPAFLPWHRLFLLRWEQEIQKLTGDENFTIPYWDWRDAEKCDICTDEYMGGQHPTNPNLLSPASFFSSWQIVCSRLEEYNSHQSLCNGTPEGPLRRNPGNHDKSRTPRLPSSADVEFCLSLTQYESGSMDKAANFSFRNTLEGFASPLTGIADASQSSMHNALHIYMNGTMSQVQGSANDPIFLLHHAFVDSIFEQWLRRHRPLQEVYPEANAPIGHNRESYMVPFIPLYRNGDFFISSKDLGYDYSYLQDSDPDSFQDYIKSYLEQASRIWSWLLGAAMVGAVLTALLAGLVSLLCRHKRKQLPEEKQPLLMEKEDYHSLYQSHL.

Positions 1-18 (MLLAVLYCLLWSFQTSAG) are cleaved as a signal peptide. The Lumenal, melanosome segment spans residues 19–476 (HFPRACVSSK…YLEQASRIWS (458 aa)). Residues Asn-86, Asn-111, and Asn-161 are each glycosylated (N-linked (GlcNAc...) asparagine). His-180, His-202, and His-211 together coordinate Cu cation. An N-linked (GlcNAc...) asparagine glycan is attached at Asn-230. Positions 287-313 (SLCNGTPEGPLRRNPGNHDKSRTPRLP) are disordered. The N-linked (GlcNAc...) asparagine glycan is linked to Asn-337. Positions 363 and 367 each coordinate Cu cation. A glycan (N-linked (GlcNAc...) asparagine) is linked at Asn-371. His-390 serves as a coordination point for Cu cation. A helical transmembrane segment spans residues 477–497 (WLLGAAMVGAVLTALLAGLVS). At 498–529 (LLCRHKRKQLPEEKQPLLMEKEDYHSLYQSHL) the chain is on the cytoplasmic side.

Belongs to the tyrosinase family. As to quaternary structure, forms an OPN3-dependent complex with DCT in response to blue light in melanocytes. Requires Cu(2+) as cofactor. Glycosylated.

Its subcellular location is the melanosome membrane. It is found in the melanosome. It carries out the reaction 2 L-dopa + O2 = 2 L-dopaquinone + 2 H2O. The enzyme catalyses L-tyrosine + O2 = L-dopaquinone + H2O. It catalyses the reaction 2 5,6-dihydroxyindole-2-carboxylate + O2 = 2 indole-5,6-quinone-2-carboxylate + 2 H2O. Its function is as follows. This is a copper-containing oxidase that functions in the formation of pigments such as melanins and other polyphenolic compounds. Catalyzes the initial and rate limiting step in the cascade of reactions leading to melanin production from tyrosine. In addition to hydroxylating tyrosine to DOPA (3,4-dihydroxyphenylalanine), also catalyzes the oxidation of DOPA to DOPA-quinone, and possibly the oxidation of DHI (5,6-dihydroxyindole) to indole-5,6 quinone. This chain is Tyrosinase, found in Homo sapiens (Human).